Reading from the N-terminus, the 734-residue chain is Probable carboxypeptidase X1 (734 aa).

The first 20 residues, 1 to 20, serve as a signal peptide directing secretion; that stretch reads MWGLLLALAAFAPAVGPALG. The interval 30 to 62 is disordered; sequence AQPGTTKVPGSTPALHSSPAQPPAETANGTSEQ. Polar residues predominate over residues 32–48; that stretch reads PGTTKVPGSTPALHSSP. Residues Asn-57, Asn-210, Asn-220, and Asn-318 are each glycosylated (N-linked (GlcNAc...) asparagine). An F5/8 type C domain is found at 113 to 274; the sequence is TGCPPLGLES…PCLRAEILAC (162 aa). Cys-115 and Cys-274 are joined by a disulfide. A Peptidase M14 domain is found at 298–621; that stretch reads QHHNYKAMRK…DALLTYLEQV (324 aa). Zn(2+) contacts are provided by His-360 and Glu-363. 2 N-linked (GlcNAc...) asparagine glycosylation sites follow: Asn-428 and Asn-472. Residue His-498 participates in Zn(2+) binding. The active-site Proton donor/acceptor is Glu-591.

This sequence belongs to the peptidase M14 family. It depends on Zn(2+) as a cofactor.

It is found in the secreted. Functionally, may be involved in cell-cell interactions. No carboxypeptidase activity was found yet. This chain is Probable carboxypeptidase X1 (CPXM1), found in Homo sapiens (Human).